We begin with the raw amino-acid sequence, 347 residues long: Virulence plasmid protein pGP2-D (347 aa).

The polypeptide is Virulence plasmid protein pGP2-D (Chlamydia psittaci (Chlamydophila psittaci)).